The sequence spans 354 residues: Protein-glutamate methylesterase/protein-glutamine glutaminase of group 3 operon (354 aa).

One can recognise a Response regulatory domain in the interval 3–121 (RILLATSTVE…MQLEQPAIEK (119 aa)). The CheB-type methylesterase domain maps to 158 to 340 (PIGIVGIAAS…LESIAENITA (183 aa)). Residues S167, H194, and D287 contribute to the active site.

It belongs to the CheB family.

The protein resides in the cytoplasm. The catalysed reaction is [protein]-L-glutamate 5-O-methyl ester + H2O = L-glutamyl-[protein] + methanol + H(+). It catalyses the reaction L-glutaminyl-[protein] + H2O = L-glutamyl-[protein] + NH4(+). In terms of biological role, involved in chemotaxis. Part of a chemotaxis signal transduction system that modulates chemotaxis in response to various stimuli. Catalyzes the demethylation of specific methylglutamate residues introduced into the chemoreceptors (methyl-accepting chemotaxis proteins or MCP) by CheR. Also mediates the irreversible deamidation of specific glutamine residues to glutamic acid. This chain is Protein-glutamate methylesterase/protein-glutamine glutaminase of group 3 operon, found in Rhizobium meliloti (strain 1021) (Ensifer meliloti).